The primary structure comprises 366 residues: Aminomethyltransferase (366 aa).

The protein belongs to the GcvT family. The glycine cleavage system is composed of four proteins: P, T, L and H.

It catalyses the reaction N(6)-[(R)-S(8)-aminomethyldihydrolipoyl]-L-lysyl-[protein] + (6S)-5,6,7,8-tetrahydrofolate = N(6)-[(R)-dihydrolipoyl]-L-lysyl-[protein] + (6R)-5,10-methylene-5,6,7,8-tetrahydrofolate + NH4(+). The glycine cleavage system catalyzes the degradation of glycine. This is Aminomethyltransferase from Bordetella petrii (strain ATCC BAA-461 / DSM 12804 / CCUG 43448).